Consider the following 639-residue polypeptide: Threonine--tRNA ligase (639 aa).

The TGS domain maps to 1 to 62 (MYQLTLPDKS…ETDANIEVLT (62 aa)). The interval 246 to 537 (DHRKIGKELD…LIEHYEGKFP (292 aa)) is catalytic. Positions 337, 388, and 514 each coordinate Zn(2+).

It belongs to the class-II aminoacyl-tRNA synthetase family. Homodimer. It depends on Zn(2+) as a cofactor.

The protein localises to the cytoplasm. The enzyme catalyses tRNA(Thr) + L-threonine + ATP = L-threonyl-tRNA(Thr) + AMP + diphosphate + H(+). Its function is as follows. Catalyzes the attachment of threonine to tRNA(Thr) in a two-step reaction: L-threonine is first activated by ATP to form Thr-AMP and then transferred to the acceptor end of tRNA(Thr). Also edits incorrectly charged L-seryl-tRNA(Thr). The protein is Threonine--tRNA ligase of Leptospira borgpetersenii serovar Hardjo-bovis (strain JB197).